A 965-amino-acid chain; its full sequence is Fibronectin-binding protein A (965 aa).

The first 36 residues, 1–36, serve as a signal peptide directing secretion; sequence MKNNLRYGIRKHKLGAASVFLGTMIVIGMGQDKEAA. Positions 7–18 match the YSIRK-G/S signaling motif motif; it reads YGIRKHKLGAAS. The interval 37–206 is disordered; it reads ASEQKTTTVE…VTSKVTVEDE (170 aa). The ligand-binding A region stretch occupies residues 37 to 514; sequence ASEQKTTTVE…SNKANGDGKY (478 aa). The span at 39 to 55 shows a compositional bias: polar residues; it reads EQKTTTVEENGNSATDN. The span at 59–74 shows a compositional bias: low complexity; that stretch reads ETQTTTTNVNTIDETQ. A compositionally biased stretch (polar residues) spans 75 to 92; it reads SYSATATEQPSNATQVTT. The segment covering 112–122 has biased composition (basic and acidic residues); sequence TVKEEVVKEEA. Residues 126–139 show a composition bias toward polar residues; the sequence is VKETTQSQDNSGDQ. Over residues 179 to 193 the composition is skewed to basic and acidic residues; it reads DVAEAKEASDAKVET. Residues 194-514 are fibrinogen/elastin/tropoelastin-binding; sequence GTDVTSKVTV…SNKANGDGKY (321 aa). The interval 515–837 is fibronectin-binding; that stretch reads GPIVDSNNFE…EGQQTIEEDT (323 aa). Residues 548-577 form a B-1 repeat; it reads ENQDNTPLDIDYHTAIDGEGGYVDGYIETI. Positions 548-607 are 2 X approximate tandem repeats; the sequence is ENQDNTPLDIDYHTAIDGEGGYVDGYIETIEETDSSAIDIDYHTAVDSEAGHVGGYTESS. A B-2 repeat occupies 578–607; sequence EETDSSAIDIDYHTAVDSEAGHVGGYTESS. 4 disordered regions span residues 598–625, 743–774, 794–903, and 916–942; these read GHVGGYTESSEESNPIDFEESTHENSKH, LGYEGGQNSGNQSFEEDTEEDKPKYEQGGNII, IEED…GKVV, and VAPTKQKQAKKSELPETGGEESTNKGM. One copy of the D-1; truncated repeat lies at 748–770; it reads GQNSGNQSFEEDTEEDKPKYEQG. A 4 X approximate tandem repeats region spans residues 748 to 839; it reads GQNSGNQSFE…QQTIEEDTTP (92 aa). A D-2; truncated repeat occupies 771-785; it reads GNIIDIDFDSVPQIH. The D-3 repeat unit spans residues 786 to 824; sequence GFNKHNEIIEEDTNKDKPNYQFGGHNSVDFEEDTLPKVS. A compositionally biased stretch (basic and acidic residues) spans 794 to 803; the sequence is IEEDTNKDKP. One copy of the D-4; truncated repeat lies at 825-839; that stretch reads GQNEGQQTIEEDTTP. The segment covering 839–885 has biased composition (pro residues); it reads PPTPPTPEVPSEPGTPTPPTPEVPSEPGKPTPPTPEVPAEPGKPVPP. 4 WR repeats span residues 840–853, 854–867, 868–881, and 882–895; these read PTPPTPEVPSEPGT, PTPPTPEVPSEPGK, PTPPTPEVPAEPGK, and PVPPAKEEPKKPSK. A 4 X tandem repeats, Pro-rich (WR) region spans residues 840–895; sequence PTPPTPEVPSEPGTPTPPTPEVPSEPGKPTPPTPEVPAEPGKPVPPAKEEPKKPSK. An LPXTG sorting signal motif is present at residues 929–933; sequence LPETG. T932 is subject to Pentaglycyl murein peptidoglycan amidated threonine. Residues 933–965 constitute a propeptide, removed by sortase; the sequence is GGEESTNKGMLFGGLFSILGLALLRRNKKNHKA.

Its subcellular location is the secreted. The protein localises to the cell wall. In terms of biological role, promotes bacterial attachment to multiple substrates, such as fibronectin (Fn), fibrinogen (Fg), elastin peptides and tropoelastin. This confers to S.aureus the ability to invade endothelial cells. Promotes adherence to and aggregation of activated platelets. In Staphylococcus aureus (strain MRSA252), this protein is Fibronectin-binding protein A (fnbA).